We begin with the raw amino-acid sequence, 581 residues long: mRNA-decapping enzyme 1B (581 aa).

Serine 145 bears the Phosphoserine mark. Disordered stretches follow at residues 181–222 and 236–258; these read QISS…PEPQ and APCQ…PEKF. Positions 204–219 are enriched in polar residues; the sequence is GSRQQRGPRPGQTSDP. Low complexity predominate over residues 244–255; that stretch reads PPQTLPLQQQQP. Residues serine 269 and serine 326 each carry the phosphoserine modification. Residues 349–411 form a disordered region; that stretch reads AENRCEPGAP…HQPVTGPGEV (63 aa). Over residues 355 to 367 the composition is skewed to low complexity; the sequence is PGAPAPASSATTP. Threonine 366 is modified (phosphothreonine). The segment covering 368-381 has biased composition (polar residues); that stretch reads VSLAQPTRLSSALP. Positions 382-401 are enriched in pro residues; sequence PQTPGPRALPRPAPPGPGPG. At serine 412 the chain carries Phosphoserine. Residues 427-468 form a disordered region; it reads QQLPAPGRPALAAKFPTATLSTRARNPLEPWRDPPPSTEQPA. Residue serine 475 is modified to Phosphoserine. The disordered stretch occupies residues 498–522; it reads SWAPPQERSRAPLPPGNQDPAATPT.

This sequence belongs to the DCP1 family. Interacts with DCP1A.

It is found in the cytoplasm. It localises to the nucleus. It carries out the reaction a 5'-end (N(7)-methyl 5'-triphosphoguanosine)-ribonucleoside in mRNA + H2O = N(7)-methyl-GDP + a 5'-end phospho-ribonucleoside in mRNA + 2 H(+). Functionally, may play a role in the degradation of mRNAs, both in normal mRNA turnover and in nonsense-mediated mRNA decay. May remove the 7-methyl guanine cap structure from mRNA molecules, yielding a 5'-phosphorylated mRNA fragment and 7m-GDP. The sequence is that of mRNA-decapping enzyme 1B (DCP1B) from Bos taurus (Bovine).